The following is a 234-amino-acid chain: Large ribosomal subunit protein uL1 (234 aa).

It belongs to the universal ribosomal protein uL1 family. Part of the 50S ribosomal subunit.

In terms of biological role, binds directly to 23S rRNA. The L1 stalk is quite mobile in the ribosome, and is involved in E site tRNA release. Functionally, protein L1 is also a translational repressor protein, it controls the translation of the L11 operon by binding to its mRNA. In Sodalis glossinidius (strain morsitans), this protein is Large ribosomal subunit protein uL1.